A 297-amino-acid chain; its full sequence is Putative heme-binding peroxidase (297 aa).

Histidine 74 (proton acceptor) is an active-site residue. Histidine 198 contributes to the heme b binding site. The active-site Tryptophan radical intermediate is tryptophan 214.

This sequence belongs to the peroxidase family. Cytochrome c peroxidase subfamily. Requires heme b as cofactor.

Destroys radicals which are normally produced within the cells and which are toxic to biological systems. This chain is Putative heme-binding peroxidase, found in Yarrowia lipolytica (strain CLIB 122 / E 150) (Yeast).